The following is a 154-amino-acid chain: Interleukin-2 (154 aa).

Residues 1–20 (MYRMQLLSCIALSLALVTNS) form the signal peptide. An O-linked (GalNAc...) threonine glycan is attached at T23. A disulfide bond links C78 and C126.

It belongs to the IL-2 family.

It localises to the secreted. In terms of biological role, cytokine produced by activated CD4-positive helper T-cells and to a lesser extend activated CD8-positive T-cells and natural killer (NK) cells that plays pivotal roles in the immune response and tolerance. Binds to a receptor complex composed of either the high-affinity trimeric IL-2R (IL2RA/CD25, IL2RB/CD122 and IL2RG/CD132) or the low-affinity dimeric IL-2R (IL2RB and IL2RG). Interaction with the receptor leads to oligomerization and conformation changes in the IL-2R subunits resulting in downstream signaling starting with phosphorylation of JAK1 and JAK3. In turn, JAK1 and JAK3 phosphorylate the receptor to form a docking site leading to the phosphorylation of several substrates including STAT5. This process leads to activation of several pathways including STAT, phosphoinositide-3-kinase/PI3K and mitogen-activated protein kinase/MAPK pathways. Functions as a T-cell growth factor and can increase NK-cell cytolytic activity as well. Promotes strong proliferation of activated B-cells and subsequently immunoglobulin production. Plays a pivotal role in regulating the adaptive immune system by controlling the survival and proliferation of regulatory T-cells, which are required for the maintenance of immune tolerance. Moreover, participates in the differentiation and homeostasis of effector T-cell subsets, including Th1, Th2, Th17 as well as memory CD8-positive T-cells. This is Interleukin-2 (IL2) from Cercocebus atys (Sooty mangabey).